Reading from the N-terminus, the 817-residue chain is Neurabin-2 (817 aa).

2 disordered regions span residues 1–52 (MMKT…KYGS) and 64–163 (MGTT…GGDK). Actin-binding regions lie at residues 1–154 (MMKT…FERS) and 164–282 (EAVA…QHRV). Position 15 is a phosphoserine; by MAPK1 (Ser-15). At Ser-17 the chain carries Phosphoserine; by CDK5. At Ser-94 the chain carries Phosphoserine; by PKA. A phosphoserine mark is found at Ser-100 and Ser-116. The tract at residues 100 to 371 (SLNENVDHSA…LERGVDNGRA (272 aa)) is interaction with D(2) dopamine receptor. Residues 131 to 141 (SAQPAPPPHPP) show a composition bias toward pro residues. The interval 169–255 (RLLRQERAGL…KRSRVFQPPP (87 aa)) is interaction with ADRA2A, ADRA2B and ADRA2C. Ser-192 is modified (phosphoserine). Phosphothreonine is present on Thr-193. Residue Ser-205 is modified to Phosphoserine; by MAPK1. At Thr-207 the chain carries Phosphothreonine. Residues 216-451 (EKADSRTGLH…DPAPSRKIHF (236 aa)) are disordered. Basic and acidic residues predominate over residues 290-301 (KPREVRKIKPVE). Composition is skewed to low complexity over residues 332-341 (STPATTASPA) and 399-409 (SGLGEDSGGSA). Over residues 410–425 (LEEDDEEDEEDGEPPY) the composition is skewed to acidic residues. Positions 417 to 494 (DEEDGEPPYE…LEKRVERLEL (78 aa)) are interaction with protein phosphatase 1. Ser-438 carries the phosphoserine modification. Positions 447–451 (RKIHF) match the PP1-binding motif motif. The tract at residues 480–525 (SAEYELEKRVERLELFPVELEKDSEGLGISIIGMGAGADMGLEKLG) is interaction with RGS2. The 89-residue stretch at 496–584 (PVELEKDSEG…RVRFMIGRER (89 aa)) folds into the PDZ domain. A coiled-coil region spans residues 595 to 616 (IQQTLEQERWQREMMEQRYAQY). Residues 595-816 (IQQTLEQERW…NLQTLRNSNS (222 aa)) are interaction with TGN38. Ser-658 bears the Phosphoserine mark. Positions 665–816 (EKLVHKFKEL…NLQTLRNSNS (152 aa)) form a coiled coil.

In terms of assembly, possibly exists as a homodimer, homotrimer or a homotetramer. Interacts with F-actin, PPP1CA, neurabin-1, TGN38 and D(2) dopamine receptor. Interacts with RGS1, RGS2, RGS4, RGS19 and ADRA1B, ADRA2A, ADRA2B, ADRA2C, CDKN2A, PPP1R2, RASGFR1 and TIAM1. Interacts (via C-terminus) with SPATA13 (via C-terminal tail). Interacts with DCLK2. Interacts with ADRA2B. Stimulation of D1 (but not D2) dopamine receptors induces Ser-94 phosphorylation. Dephosphorylation of Ser-94 is mediated mainly by PP1 and to a lesser extent by PP2A. Phosphorylation of spinophilin disrupts its association with F-actin, but does not affect its binding to PP1.

It localises to the cytoplasm. The protein localises to the cytoskeleton. It is found in the nucleus. Its subcellular location is the postsynaptic density. The protein resides in the cell junction. It localises to the adherens junction. The protein localises to the cell projection. It is found in the dendritic spine. Its subcellular location is the cell membrane. The protein resides in the lamellipodium. It localises to the filopodium. The protein localises to the ruffle membrane. In terms of biological role, seems to act as a scaffold protein in multiple signaling pathways. Modulates excitatory synaptic transmission and dendritic spine morphology. Binds to actin filaments (F-actin) and shows cross-linking activity. Binds along the sides of the F-actin. May play an important role in linking the actin cytoskeleton to the plasma membrane at the synaptic junction. Believed to target protein phosphatase 1/PP1 to dendritic spines, which are rich in F-actin, and regulates its specificity toward ion channels and other substrates, such as AMPA-type and NMDA-type glutamate receptors. Plays a role in regulation of G-protein coupled receptor signaling, including dopamine D2 receptors and alpha-adrenergic receptors. May establish a signaling complex for dopaminergic neurotransmission through D2 receptors by linking receptors downstream signaling molecules and the actin cytoskeleton. Binds to ADRA1B and RGS2 and mediates regulation of ADRA1B signaling. May confer to Rac signaling specificity by binding to both, RacGEFs and Rac effector proteins. Probably regulates p70 S6 kinase activity by forming a complex with TIAM1. Required for hepatocyte growth factor (HGF)-induced cell migration. The protein is Neurabin-2 (Ppp1r9b) of Mus musculus (Mouse).